The chain runs to 354 residues: Uroporphyrinogen decarboxylase (354 aa).

Substrate contacts are provided by residues R27–R31, D77, Y154, S209, and H327.

The protein belongs to the uroporphyrinogen decarboxylase family. As to quaternary structure, homodimer.

Its subcellular location is the cytoplasm. It carries out the reaction uroporphyrinogen III + 4 H(+) = coproporphyrinogen III + 4 CO2. It participates in porphyrin-containing compound metabolism; protoporphyrin-IX biosynthesis; coproporphyrinogen-III from 5-aminolevulinate: step 4/4. Its function is as follows. Catalyzes the decarboxylation of four acetate groups of uroporphyrinogen-III to yield coproporphyrinogen-III. The chain is Uroporphyrinogen decarboxylase from Shewanella pealeana (strain ATCC 700345 / ANG-SQ1).